The primary structure comprises 258 residues: MTEGGEYSPAMMSAEPFLTMKKMKKSNHNKNNQRRFSDEQIKSLEMMFESETRLEPRKKVQLARELGLQPRQVAIWFQNKRARWKSKQLETEYNILRQNYDNLASQFESLKKEKQALVSELQRLKEATQKKTQEEERQCSGDQAVVALSSTHHESENEENRRRKPEEVRPEMEMKDDKGHHGVMCDHHDYEDDDNGYSNNIKREYFGGFEEEPDHLMNIVEPADSCLTSSDDWRGFKSDTTTLLDQSSNNYPWRDFWS.

The homeobox DNA-binding region spans 29–88; the sequence is NKNNQRRFSDEQIKSLEMMFESETRLEPRKKVQLARELGLQPRQVAIWFQNKRARWKSKQ. Residues 89-124 form a leucine-zipper region; that stretch reads LETEYNILRQNYDNLASQFESLKKEKQALVSELQRL. A disordered region spans residues 149-183; the sequence is SSTHHESENEENRRRKPEEVRPEMEMKDDKGHHGV. The span at 151 to 183 shows a compositional bias: basic and acidic residues; it reads THHESENEENRRRKPEEVRPEMEMKDDKGHHGV.

This sequence belongs to the HD-ZIP homeobox family. Class I subfamily. As to quaternary structure, interacts with TBP2 and TFIIB1. As to expression, widely expressed.

Its subcellular location is the nucleus. Functionally, probable transcription activator that may act as growth regulators in response to water deficit. The protein is Homeobox-leucine zipper protein ATHB-7 (ATHB-7) of Arabidopsis thaliana (Mouse-ear cress).